A 122-amino-acid chain; its full sequence is Large ribosomal subunit protein uL14 (122 aa).

Belongs to the universal ribosomal protein uL14 family. In terms of assembly, part of the 50S ribosomal subunit. Forms a cluster with proteins L3 and L19. In the 70S ribosome, L14 and L19 interact and together make contacts with the 16S rRNA in bridges B5 and B8.

Binds to 23S rRNA. Forms part of two intersubunit bridges in the 70S ribosome. The sequence is that of Large ribosomal subunit protein uL14 from Anaeromyxobacter sp. (strain Fw109-5).